The chain runs to 445 residues: Xylose isomerase (445 aa).

Active-site residues include H107 and D110. Mg(2+)-binding residues include E238, E274, H277, D302, D313, D315, and D345.

It belongs to the xylose isomerase family. In terms of assembly, homotetramer. It depends on Mg(2+) as a cofactor.

The protein localises to the cytoplasm. The catalysed reaction is alpha-D-xylose = alpha-D-xylulofuranose. The polypeptide is Xylose isomerase (xylA) (Bacillus spizizenii (strain ATCC 23059 / NRRL B-14472 / W23) (Bacillus subtilis subsp. spizizenii)).